The sequence spans 467 residues: Immunoglobulin superfamily member 21 (467 aa).

Residues 1-24 (MRTAPSLRRCVCLLLAAILDLARG) form the signal peptide. The Ig-like 1 domain occupies 25–132 (YLTVNIEPLP…RATREKVVLA (108 aa)). Residues C46 and C116 are joined by a disulfide bond. 2 N-linked (GlcNAc...) asparagine glycosylation sites follow: N82 and N165. Positions 229–259 (LSLLDAENRGGRPYTERPSRGLTPDPNILLQ) are disordered. The span at 234 to 247 (AENRGGRPYTERPS) shows a compositional bias: basic and acidic residues. An Ig-like 2 domain is found at 344-429 (PKIVMTPSRA…GSTDTHTRLI (86 aa)). N-linked (GlcNAc...) asparagine glycans are attached at residues N407 and N444.

Interacts (Ig-like 1 domain) with NRXN2 (via Laminin G-like 1 domain) in a trans-interaction manner.

The protein resides in the postsynaptic cell membrane. In terms of biological role, involved in synaptic inhibition in the brain. Selectively regulates inhibitory presynaptic differentiation through interacting with presynaptic NRXN2. This Homo sapiens (Human) protein is Immunoglobulin superfamily member 21.